The primary structure comprises 212 residues: Small ribosomal subunit protein eS1 (212 aa).

It belongs to the eukaryotic ribosomal protein eS1 family.

The chain is Small ribosomal subunit protein eS1 from Ignicoccus hospitalis (strain KIN4/I / DSM 18386 / JCM 14125).